The chain runs to 79 residues: Small ribosomal subunit protein bS18 (79 aa).

The protein belongs to the bacterial ribosomal protein bS18 family. As to quaternary structure, part of the 30S ribosomal subunit. Forms a tight heterodimer with protein bS6.

Its function is as follows. Binds as a heterodimer with protein bS6 to the central domain of the 16S rRNA, where it helps stabilize the platform of the 30S subunit. This chain is Small ribosomal subunit protein bS18, found in Nitrobacter hamburgensis (strain DSM 10229 / NCIMB 13809 / X14).